We begin with the raw amino-acid sequence, 227 residues long: Urease accessory protein UreE (227 aa).

The interval 192–227 (PHGSGLHVHAIHSHGHSHSHDHDHDHNHDHDHKHKQ) is disordered. Residues 209-221 (HSHDHDHDHNHDH) are compositionally biased toward basic and acidic residues.

The protein belongs to the UreE family.

Its subcellular location is the cytoplasm. Its function is as follows. Involved in urease metallocenter assembly. Binds nickel. Probably functions as a nickel donor during metallocenter assembly. In Yersinia bercovieri, this protein is Urease accessory protein UreE.